Here is a 145-residue protein sequence, read N- to C-terminus: Ribosomal RNA large subunit methyltransferase H (145 aa).

S-adenosyl-L-methionine contacts are provided by residues leucine 64, glycine 93, and 112-117 (LSPLTF).

This sequence belongs to the RNA methyltransferase RlmH family. Homodimer.

The protein resides in the cytoplasm. It catalyses the reaction pseudouridine(1915) in 23S rRNA + S-adenosyl-L-methionine = N(3)-methylpseudouridine(1915) in 23S rRNA + S-adenosyl-L-homocysteine + H(+). Functionally, specifically methylates the pseudouridine at position 1915 (m3Psi1915) in 23S rRNA. The protein is Ribosomal RNA large subunit methyltransferase H of Prochlorococcus marinus (strain NATL1A).